The chain runs to 406 residues: Corticosteroid-binding globulin (406 aa).

The signal sequence occupies residues Met-1–Ala-22. Residues Asn-95, Asn-119, and Asn-223 are each glycosylated (N-linked (GlcNAc...) asparagine). Gln-253 contributes to the cortisol binding site. A glycan (N-linked (GlcNAc...) asparagine) is linked at Asn-259. The cortisol site is built by Gln-285 and Trp-394.

Belongs to the serpin family.

The protein resides in the secreted. Major transport protein for glucocorticoids and progestins in the blood of almost all vertebrate species. The protein is Corticosteroid-binding globulin (Serpina6) of Sus scrofa (Pig).